A 99-amino-acid polypeptide reads, in one-letter code: NADH dehydrogenase [ubiquinone] 1 alpha subcomplex subunit 2 (99 aa).

Ala-2 bears the N-acetylalanine mark. Cys-24 and Cys-58 are disulfide-bonded. Lys-64 carries the post-translational modification N6-acetyllysine; alternate. Lys-64 is modified (N6-succinyllysine; alternate).

It belongs to the complex I NDUFA2 subunit family. In terms of assembly, complex I is composed of 45 different subunits.

Its subcellular location is the mitochondrion inner membrane. In terms of biological role, accessory subunit of the mitochondrial membrane respiratory chain NADH dehydrogenase (Complex I), that is believed not to be involved in catalysis. Complex I functions in the transfer of electrons from NADH to the respiratory chain. The immediate electron acceptor for the enzyme is believed to be ubiquinone. In Homo sapiens (Human), this protein is NADH dehydrogenase [ubiquinone] 1 alpha subcomplex subunit 2 (NDUFA2).